Reading from the N-terminus, the 191-residue chain is Protein GrpE (191 aa).

Over residues 1-11 the composition is skewed to basic and acidic residues; it reads MTDSSNAHEAE. Disordered regions lie at residues 1–22 and 172–191; these read MTDS…DNEI and KVSK…NNNE.

This sequence belongs to the GrpE family. In terms of assembly, homodimer.

It localises to the cytoplasm. Participates actively in the response to hyperosmotic and heat shock by preventing the aggregation of stress-denatured proteins, in association with DnaK and GrpE. It is the nucleotide exchange factor for DnaK and may function as a thermosensor. Unfolded proteins bind initially to DnaJ; upon interaction with the DnaJ-bound protein, DnaK hydrolyzes its bound ATP, resulting in the formation of a stable complex. GrpE releases ADP from DnaK; ATP binding to DnaK triggers the release of the substrate protein, thus completing the reaction cycle. Several rounds of ATP-dependent interactions between DnaJ, DnaK and GrpE are required for fully efficient folding. The protein is Protein GrpE of Chlamydia abortus (strain DSM 27085 / S26/3) (Chlamydophila abortus).